We begin with the raw amino-acid sequence, 215 residues long: Tricarboxylate transporter ALT9 (215 aa).

2 Solcar repeats span residues 18 to 106 and 111 to 197; these read TTVV…LAPM and CGVS…VVRL. Transmembrane regions (helical) follow at residues 19 to 39, 112 to 132, and 182 to 202; these read TVVGNMVAGMCAGVAESVLVL, GVSTSVVAGALAGVITVYCTM, and VAGAIAFTLYEEVVRLTGFLV.

Belongs to the mitochondrial carrier (TC 2.A.29) family.

It localises to the mitochondrion inner membrane. It participates in mycotoxin biosynthesis. Tricarboxylate transporter; part of the gene cluster that mediates the biosynthesis of the host-selective toxins (HSTs) AAL-toxins, sphinganine-analog mycotoxins responsible for Alternaria stem canker on tomato by the tomato pathotype. The biosynthesis starts with the polyketide synthase ALT1-catalyzed C-16 carbon chain assembly from one starter acetyl-CoA unit with malonyl-CoA extender units. ALT1 also selectively transfers methyl groups at the first and the third cycle of chain elongation for AAL toxin. The C-16 polyketide chain is released from the enzyme by a nucleophilic attack of a carbanion, which is derived from R-carbon of glycin by decarboxylation, on the carbonyl carbon of polyketide acyl chain. This step is probably catalyzed by a pyridoxal 5'-phosphate-dependent aminoacyl transferase ALT4. The respective functions of the other enzymes encoded by the cluster have still to be elucidated. The sphingosine N-acyltransferase-like protein ALT7 seems not to act as a resistance/self-tolerance factor against the toxin in the toxin biosynthetic gene cluster, contrary to what is expected. This Alternaria alternata (Alternaria rot fungus) protein is Tricarboxylate transporter ALT9.